Consider the following 259-residue polypeptide: Putative hydro-lyase Bphyt_4813 (259 aa).

The protein belongs to the D-glutamate cyclase family.

The chain is Putative hydro-lyase Bphyt_4813 from Paraburkholderia phytofirmans (strain DSM 17436 / LMG 22146 / PsJN) (Burkholderia phytofirmans).